Consider the following 266-residue polypeptide: 4-hydroxy-tetrahydrodipicolinate reductase (266 aa).

10–15 (GPRGRM) is a binding site for NAD(+). Residue K38 participates in NADP(+) binding. NAD(+) is bound by residues 99–101 (GTT) and 125–128 (APNF). Residue H155 is the Proton donor/acceptor of the active site. H156 lines the (S)-2,3,4,5-tetrahydrodipicolinate pocket. The Proton donor role is filled by K159. 165–166 (GT) is a binding site for (S)-2,3,4,5-tetrahydrodipicolinate.

It belongs to the DapB family.

It is found in the cytoplasm. It carries out the reaction (S)-2,3,4,5-tetrahydrodipicolinate + NAD(+) + H2O = (2S,4S)-4-hydroxy-2,3,4,5-tetrahydrodipicolinate + NADH + H(+). It catalyses the reaction (S)-2,3,4,5-tetrahydrodipicolinate + NADP(+) + H2O = (2S,4S)-4-hydroxy-2,3,4,5-tetrahydrodipicolinate + NADPH + H(+). It functions in the pathway amino-acid biosynthesis; L-lysine biosynthesis via DAP pathway; (S)-tetrahydrodipicolinate from L-aspartate: step 4/4. In terms of biological role, catalyzes the conversion of 4-hydroxy-tetrahydrodipicolinate (HTPA) to tetrahydrodipicolinate. The polypeptide is 4-hydroxy-tetrahydrodipicolinate reductase (Bacillus cytotoxicus (strain DSM 22905 / CIP 110041 / 391-98 / NVH 391-98)).